Consider the following 818-residue polypeptide: Response regulator SSK1 (818 aa).

Positions 611-769 (NVLIVEDNPI…WLERKVMEWG (159 aa)) constitute a Response regulatory domain. The residue at position 660 (D660) is a 4-aspartylphosphate.

Belongs to the SSK1 family.

Its subcellular location is the cytoplasm. Its function is as follows. Two-domain response regulator protein in the two-component signal transduction system of the HOG1 pathway. Modulates stress response, melanin biosynthesis and virulence via its regulation of the phosphorylation of HOG1. The chain is Response regulator SSK1 from Verticillium dahliae (strain VdLs.17 / ATCC MYA-4575 / FGSC 10137) (Verticillium wilt).